Here is a 499-residue protein sequence, read N- to C-terminus: Dual specificity protein kinase CLK2 (499 aa).

Residues 1-67 (MPHPRRYHSS…SYDDRSSDRR (67 aa)) form a disordered region. The span at 8–21 (HSSERGSRGSYREH) shows a compositional bias: basic and acidic residues. Positions 22–33 (YRSRKHKRRRSR) are enriched in basic residues. Phosphoserine; by PKB/AKT1 is present on S34. The span at 47 to 67 (REDSYHVRSRSSYDDRSSDRR) shows a compositional bias: basic and acidic residues. S98 bears the Phosphoserine mark. The residue at position 99 (Y99) is a Phosphotyrosine; by autocatalysis. The disordered stretch occupies residues 101 to 143 (YQRENSSYRSQRSSRRKHRRRRRRSRTFSRSSSQHSSRRAKSV). Residues 112–127 (RSSRRKHRRRRRRSRT) show a composition bias toward basic residues. T127 bears the Phosphothreonine; by PKB/AKT1 mark. Phosphoserine; by autocatalysis is present on S142. At Y153 the chain carries Phosphotyrosine. The Protein kinase domain occupies 163 to 479 (YEIVSTLGEG…LGEALQHPFF (317 aa)). Residues 169–177 (LGEGTFGRV) and K193 each bind ATP. D290 (proton acceptor) is an active-site residue. T344 carries the phosphothreonine; by PKB/AKT2 modification.

The protein belongs to the protein kinase superfamily. CMGC Ser/Thr protein kinase family. Lammer subfamily. Interacts with RBMX. Interacts with AKT1 and UBL5. In terms of processing, autophosphorylates on all three types of residues. Phosphorylation on Ser-34 and Thr-127 by AKT1 is induced by ionizing radiation or insulin. Phosphorylation plays a critical role in cell proliferation following low dose radiation and prevents cell death following high dose radiation. Phosphorylation at Thr-344 by PKB/AKT2 induces its kinase activity which is required for its stability. The phosphorylation status at Ser-142 influences its subnuclear localization; inhibition of phosphorylation at Ser-142 results in accumulation in the nuclear speckle. Endothelial cells. Expressed in androgen-dependent prostate cancer cells.

The protein localises to the nucleus. It localises to the nucleus speckle. The enzyme catalyses L-seryl-[protein] + ATP = O-phospho-L-seryl-[protein] + ADP + H(+). It catalyses the reaction L-threonyl-[protein] + ATP = O-phospho-L-threonyl-[protein] + ADP + H(+). It carries out the reaction L-tyrosyl-[protein] + ATP = O-phospho-L-tyrosyl-[protein] + ADP + H(+). 5,6-dichloro-1-b-D-ribofuranosylbenzimidazole (DRB) inhibits autophosphorylation. TG003 inhibits its kinase activity and affects the regulation of alternative splicing mediated by phosphorylation of SR proteins. Functionally, dual specificity kinase acting on both serine/threonine and tyrosine-containing substrates. Phosphorylates serine- and arginine-rich (SR) proteins of the spliceosomal complex. May be a constituent of a network of regulatory mechanisms that enable SR proteins to control RNA splicing and can cause redistribution of SR proteins from speckles to a diffuse nucleoplasmic distribution. Acts as a suppressor of hepatic gluconeogenesis and glucose output by repressing PPARGC1A transcriptional activity on gluconeogenic genes via its phosphorylation. Phosphorylates PPP2R5B thereby stimulating the assembly of PP2A phosphatase with the PPP2R5B-AKT1 complex leading to dephosphorylation of AKT1. Phosphorylates: PTPN1, SRSF1 and SRSF3. Regulates the alternative splicing of tissue factor (F3) pre-mRNA in endothelial cells. Phosphorylates PAGE4 at several serine and threonine residues and this phosphorylation attenuates the ability of PAGE4 to potentiate the transcriptional activator activity of JUN. This chain is Dual specificity protein kinase CLK2 (CLK2), found in Homo sapiens (Human).